Consider the following 1314-residue polypeptide: Synergin gamma (1314 aa).

Positions 115 to 155 (MQKQFAEEQQKRFEQQQKLLEEERKRRQFEEQKQKLRLLSS) form a coiled coil. The disordered stretch occupies residues 178 to 199 (GFSRDAKMHPTPASHPKKPGPS). Residues 295 to 388 (NESLVPDAYK…QFPAAPIPTL (94 aa)) enclose the EH domain. The short motif at 457-461 (DFQDF) is the DFXDF motif 1 element. Residues 460 to 498 (DFQDASKSGSLDDSFSDFQELPASSKTSNSQHGNSAPSL) form a disordered region. Residues 462-496 (QDASKSGSLDDSFSDFQELPASSKTSNSQHGNSAP) show a composition bias toward polar residues. Phosphoserine is present on serine 473. N6-acetyllysine is present on lysine 513. Residues 518-786 (KGIAADKSSE…ADFHSSKFSS (269 aa)) form an interaction with AP1G1 region. Residue serine 580 is modified to Phosphoserine. The tract at residues 666 to 678 (LADDFGEFSLFGE) is interaction with AP1G1, AP1G2 and GGA1. A DFXDF motif 2 motif is present at residues 690 to 694 (DFADF). Serine 720 bears the Phosphoserine mark. Position 744 is an N6-acetyllysine (lysine 744). 2 positions are modified to phosphoserine: serine 752 and serine 772. Residues 775–779 (DFADF) carry the DFXDF motif 3 motif. Serine 812, serine 852, serine 855, serine 909, serine 919, and serine 935 each carry phosphoserine. 2 disordered regions span residues 972 to 1026 (PQTS…DFGE) and 1073 to 1102 (SLSLGDKEISRSSPSPALEQPFRDRSNTLN). Positions 976 to 990 (EQKEYENRDYKDFTK) are enriched in basic and acidic residues. Residues 1001–1019 (EATCPSPASSGASQETPNE) are compositionally biased toward polar residues. Phosphoserine is present on residues serine 1006, serine 1073, serine 1075, serine 1087, and serine 1098. At threonine 1100 the chain carries Phosphothreonine.

Self-associates. Interacts with GGA1 (via GAE domain). Interacts with GGA2 and GGA3. Interacts with AP1G1 (via GAE domain), a subunit of adapter protein complex AP-1. Interacts with AP1G2 (via GAE domain) a subunit of adapter protein complex AP-1. Component of the aftiphilin/p200/gamma-synergin complex, at least composed of AFTPH/aftiphilin, HEATR5B/p200a and SYNRG/gamma-synergin, which plays a role in the AP1G1/AP-1-mediated trafficking of transferrin from early to recycling endosomes. Within the complex interacts with AFTPH/aftiphilin and HEATR5B/p200a; the interactions are direct. Interacts (via EH domain) with SCAMP1.

The protein localises to the cytoplasm. The protein resides in the golgi apparatus. Its subcellular location is the trans-Golgi network membrane. It localises to the perinuclear region. It is found in the cytoplasmic vesicle. The protein localises to the clathrin-coated vesicle. Plays a role in endocytosis and/or membrane trafficking at the trans-Golgi network (TGN). May act by linking the adapter protein complex AP-1 to other proteins. Component of clathrin-coated vesicles. Component of the aftiphilin/p200/gamma-synergin complex, which plays roles in AP1G1/AP-1-mediated protein trafficking including the trafficking of transferrin from early to recycling endosomes, and the membrane trafficking of furin and the lysosomal enzyme cathepsin D between the trans-Golgi network (TGN) and endosomes. This Homo sapiens (Human) protein is Synergin gamma.